The following is a 208-amino-acid chain: Microtubule-associated protein Jupiter (208 aa).

2 disordered regions span residues 24–43 and 82–106; these read RPPGGGSSDIFGSEMPQTPR and RGQKTVDSHSRLFGEPTRPITPGKN. A Phosphoserine modification is found at S30. At T41 the chain carries Phosphothreonine. Residues 82–93 show a composition bias toward basic and acidic residues; that stretch reads RGQKTVDSHSRL. Phosphothreonine is present on residues T98 and T102. Phosphoserine occurs at positions 111, 139, and 150. Residues 132 to 208 form a disordered region; the sequence is HYNGKSGSVS…PPGGYSSGLW (77 aa). Positions 137–150 are enriched in low complexity; it reads SGSVSSASSSVSSS. Composition is skewed to polar residues over residues 151-165 and 178-189; these read TENLKMNSGSRSEGN and EYSQRQESSNGG.

Belongs to the MAP Jupiter family. As to expression, ubiquitous expression throughout development. Expressed during cell division in the syncytial embryo. Expressed in developing photoreceptors of the eye imaginal disk of the third larval stage. In adults, highly expressed in neurons of the brain, concentrated in axons. In the adult ovaries, expression accumulates in the germarium and the polar follicular cells as well as in the oocyte along the microtubule network.

Its subcellular location is the nucleus. It is found in the cytoplasm. The protein resides in the cytoskeleton. It localises to the spindle. Binds to all microtubule populations. This is Microtubule-associated protein Jupiter from Drosophila melanogaster (Fruit fly).